The sequence spans 276 residues: RNA-binding protein pno-1 (276 aa).

Disordered regions lie at residues 1–30 (MATS…VPST) and 62–101 (DVVM…SRVV). Acidic residues predominate over residues 8–27 (FDDEFPMEEGMPELLDDEDV). Residues 197–249 (GDHVSRAIGRIAGKDGRTKLVIENTTKTRIVVANTKIHILGAYQNLKLARNAV) enclose the KH domain.

Belongs to the PNO1 family. In terms of assembly, part of the small subunit (SSU) processome, composed of more than 70 proteins and the RNA chaperone small nucleolar RNA (snoRNA) U3.

The protein resides in the nucleus. It localises to the nucleolus. Functionally, part of the small subunit (SSU) processome, first precursor of the small eukaryotic ribosomal subunit. During the assembly of the SSU processome in the nucleolus, many ribosome biogenesis factors, an RNA chaperone and ribosomal proteins associate with the nascent pre-rRNA and work in concert to generate RNA folding, modifications, rearrangements and cleavage as well as targeted degradation of pre-ribosomal RNA by the RNA exosome. Positively regulates dimethylation of two adjacent adenosines in the loop of a conserved hairpin near the 3'-end of 18S rRNA. The chain is RNA-binding protein pno-1 from Caenorhabditis briggsae.